Reading from the N-terminus, the 416-residue chain is uncharacterized protein (416 aa).

Zn(2+) is bound by residues H29, D31, E144, H215, and H236.

It belongs to the metallo-dependent hydrolases superfamily. Peptidase M19 family. It depends on Zn(2+) as a cofactor.

It catalyses the reaction an L-aminoacyl-L-amino acid + H2O = 2 an L-alpha-amino acid. This is an uncharacterized protein from Schizosaccharomyces pombe (strain 972 / ATCC 24843) (Fission yeast).